A 78-amino-acid polypeptide reads, in one-letter code: Dermaseptin-B1 (78 aa).

A signal peptide spans M1–C22. A propeptide spanning residues E23–M42 is cleaved from the precursor. Position 75 is a glutamine amide (Q75). The propeptide occupies G76–Q78.

It belongs to the frog skin active peptide (FSAP) family. Dermaseptin subfamily. As to expression, expressed by the skin glands.

The protein resides in the secreted. In terms of biological role, possesses a potent antimicrobial activity against bacteria, fungi and protozoa. Probably acts by disturbing membrane functions with its amphipathic structure. The sequence is that of Dermaseptin-B1 from Phyllomedusa bicolor (Two-colored leaf frog).